The following is a 457-amino-acid chain: Protein translocase subunit SecY (457 aa).

Transmembrane regions (helical) follow at residues 17–37 (IFFTFSLLALCRIGVFIPVPG), 75–95 (IALGVVPYISASIIVQLLVVF), 118–138 (TRLFTLVLACVQSLLFAKFAL), 162–182 (WVFYLTTVVVMITGTLLLMWV), 195–215 (ISLIITLGILASFPSVLGSIF), 230–250 (IVSLLILCAVFVFVLMATVLI), 287–307 (VIPVIFASSLLMFPATIGQFL), 326–346 (VAYSIFYVLLIIFFTYFWTAT), 386–406 (LLGAVFLAVVAILPSILGRIL), and 412–432 (VSYFLGGTAMLIVVGVILDTM).

It belongs to the SecY/SEC61-alpha family. In terms of assembly, component of the Sec protein translocase complex. Heterotrimer consisting of SecY, SecE and SecG subunits. The heterotrimers can form oligomers, although 1 heterotrimer is thought to be able to translocate proteins. Interacts with the ribosome. Interacts with SecDF, and other proteins may be involved. Interacts with SecA.

Its subcellular location is the cell inner membrane. Its function is as follows. The central subunit of the protein translocation channel SecYEG. Consists of two halves formed by TMs 1-5 and 6-10. These two domains form a lateral gate at the front which open onto the bilayer between TMs 2 and 7, and are clamped together by SecE at the back. The channel is closed by both a pore ring composed of hydrophobic SecY resides and a short helix (helix 2A) on the extracellular side of the membrane which forms a plug. The plug probably moves laterally to allow the channel to open. The ring and the pore may move independently. The polypeptide is Protein translocase subunit SecY (Chlamydia trachomatis serovar D (strain ATCC VR-885 / DSM 19411 / UW-3/Cx)).